The chain runs to 80 residues: UPF0291 protein YlaC (80 aa).

Belongs to the UPF0291 family.

Its subcellular location is the cytoplasm. The protein is UPF0291 protein YlaC (ylcA) of Lactococcus lactis subsp. lactis (strain IL1403) (Streptococcus lactis).